Consider the following 402-residue polypeptide: Queuine tRNA-ribosyltransferase-like protein (402 aa).

It belongs to the queuine tRNA-ribosyltransferase family.

The protein is Queuine tRNA-ribosyltransferase-like protein of Theileria parva (East coast fever infection agent).